Consider the following 172-residue polypeptide: Bifunctional protein PyrR (172 aa).

Residues 36-37 (TG), R77, 94-102 (DDVLMSGRT), and V151 each bind substrate. Positions 90–102 (LVLVDDVLMSGRT) match the PRPP-binding motif.

It belongs to the purine/pyrimidine phosphoribosyltransferase family. PyrR subfamily.

The catalysed reaction is UMP + diphosphate = 5-phospho-alpha-D-ribose 1-diphosphate + uracil. Its function is as follows. Regulates the transcription of the pyrimidine nucleotide (pyr) operon in response to exogenous pyrimidines. In terms of biological role, also displays a weak uracil phosphoribosyltransferase activity which is not physiologically significant. The sequence is that of Bifunctional protein PyrR from Pseudomonas putida (Arthrobacter siderocapsulatus).